The primary structure comprises 122 residues: Serum amyloid A-3 protein (122 aa).

The signal sequence occupies residues 1-18 (MKLSIGIIFCFLILGVNS). The interval 88 to 122 (GRGAEDSKADQEANQWGRSGNDPNHFRPKGLPDKY) is disordered. Residues 99–109 (EANQWGRSGND) are compositionally biased toward polar residues.

It belongs to the SAA family. In terms of tissue distribution, expressed by the liver; secreted in plasma. Expressed in synovial fibroblasts.

The protein localises to the secreted. Its function is as follows. Major acute phase reactant. Apolipoprotein of the HDL complex. In vitro exhibits antimicrobial activity against Escherichia coli, Streptococcus uberis and Pseudomonas aeruginosa. This is Serum amyloid A-3 protein (SAA3) from Oryctolagus cuniculus (Rabbit).